A 1024-amino-acid chain; its full sequence is Beta-galactosidase (1024 aa).

Residues N103 and D202 each coordinate substrate. D202 is a binding site for Na(+). The Mg(2+) site is built by E417, H419, and E462. Substrate-binding positions include E462 and 538-541 (EYAH). E462 acts as the Proton donor in catalysis. E538 acts as the Nucleophile in catalysis. N598 contacts Mg(2+). The Na(+) site is built by F602 and N605. Positions 605 and 1000 each coordinate substrate.

The protein belongs to the glycosyl hydrolase 2 family. As to quaternary structure, homotetramer. It depends on Mg(2+) as a cofactor. The cofactor is Na(+).

It carries out the reaction Hydrolysis of terminal non-reducing beta-D-galactose residues in beta-D-galactosides.. This is Beta-galactosidase from Escherichia coli O1:K1 / APEC.